Reading from the N-terminus, the 279-residue chain is Pleckstrin homology domain-containing family F member 1 (279 aa).

The PH domain occupies 35-131 (VLLGEGVLTK…WISHIEECVR (97 aa)). An FYVE-type zinc finger spans residues 152 to 212 (DKATDICMRC…VCSLCYRELA (61 aa)). 8 residues coordinate Zn(2+): cysteine 158, cysteine 161, cysteine 175, cysteine 178, cysteine 183, cysteine 186, cysteine 204, and cysteine 207. A disordered region spans residues 219-264 (EAKERFRGSPGQLTHLGSTMCGASSGDDDDSDEDREGSGDGDWPTQ). The span at 244–253 (GDDDDSDEDR) shows a compositional bias: acidic residues.

The protein resides in the nucleus. It localises to the cytoplasm. The protein localises to the perinuclear region. It is found in the lysosome. May induce apoptosis through the lysosomal-mitochondrial pathway. Translocates to the lysosome initiating the permeabilization of lysosomal membrane (LMP) and resulting in the release of CTSD and CTSL to the cytoplasm. Triggers the caspase-independent apoptosis by altering mitochondrial membrane permeabilization (MMP) resulting in the release of PDCD8. The protein is Pleckstrin homology domain-containing family F member 1 (Plekhf1) of Rattus norvegicus (Rat).